A 203-amino-acid chain; its full sequence is Potassium channel Cha6605_3372 (203 aa).

The Cytoplasmic portion of the chain corresponds to 1–7; sequence MVEAPEQ. A helical transmembrane segment spans residues 8–31; it reads SETGRIEAFSDGVFAIAITLLVLE. The short motif at 12-18 is the RxxxFSD motif element; sequence RIEAFSD. The Extracellular segment spans residues 32–52; that stretch reads IKVPQHKIVETVGLVSSLLSL. A short helix H1 region spans residues 37–42; sequence HKIVET. A short helix H2 region spans residues 44–50; that stretch reads GLVSSLL. Residues 53 to 78 form a helical membrane-spanning segment; that stretch reads WPSYLAFLTSFASILVMWVNHHRIFS. At 79-84 the chain is on the cytoplasmic side; that stretch reads LVARTD. The helical transmembrane segment at 85–110 threads the bilayer; sequence HAFFYWNGLLLMLVTFVPFPTALLAE. Topologically, residues 111-117 are extracellular; that stretch reads YLIHPQA. Residues 118–142 form a helical membrane-spanning segment; it reads RVAASVYAGIFLAIAIVFNRLWKHA. Over 143-154 the chain is Cytoplasmic; that stretch reads ATADRLLAQKAD. The helical transmembrane segment at 155 to 181 threads the bilayer; sequence RHEVDAITKQYRFGPGLYLVAFALSFI. Residues 182 to 183 lie on the Extracellular side of the membrane; that stretch reads SV. The helical transmembrane segment at 184–199 threads the bilayer; it reads WLSVGVCFVLAIYFAL. The Cytoplasmic portion of the chain corresponds to 200–203; that stretch reads RSNA.

It belongs to the TMEM175 family. In terms of assembly, homotetramer.

The protein localises to the membrane. The catalysed reaction is K(+)(in) = K(+)(out). In terms of biological role, potassium channel. The channel is permeable for K(+), Rb(+) and Cs(+), while it is unable to conduct Na(+). The polypeptide is Potassium channel Cha6605_3372 (Chamaesiphon minutus (strain ATCC 27169 / PCC 6605)).